Consider the following 71-residue polypeptide: Large ribosomal subunit protein bL31 (71 aa).

Zn(2+) is bound by residues cysteine 16, cysteine 18, cysteine 37, and cysteine 40.

It belongs to the bacterial ribosomal protein bL31 family. Type A subfamily. In terms of assembly, part of the 50S ribosomal subunit. Zn(2+) serves as cofactor.

Its function is as follows. Binds the 23S rRNA. This chain is Large ribosomal subunit protein bL31, found in Mannheimia succiniciproducens (strain KCTC 0769BP / MBEL55E).